Reading from the N-terminus, the 166-residue chain is Lipoprotein signal peptidase (166 aa).

Helical transmembrane passes span 10–30 (GGAL…DQLT), 46–66 (LTPF…GFLA), 71–91 (WQRW…CYLL), and 100–120 (FSLS…DRLI). Residues Asp126 and Asp144 contribute to the active site. A helical transmembrane segment spans residues 135-155 (WHWPAFNLADSAITVGAVLLI).

The protein belongs to the peptidase A8 family.

The protein localises to the cell inner membrane. It catalyses the reaction Release of signal peptides from bacterial membrane prolipoproteins. Hydrolyzes -Xaa-Yaa-Zaa-|-(S,diacylglyceryl)Cys-, in which Xaa is hydrophobic (preferably Leu), and Yaa (Ala or Ser) and Zaa (Gly or Ala) have small, neutral side chains.. It participates in protein modification; lipoprotein biosynthesis (signal peptide cleavage). Its function is as follows. This protein specifically catalyzes the removal of signal peptides from prolipoproteins. The sequence is that of Lipoprotein signal peptidase from Burkholderia thailandensis (strain ATCC 700388 / DSM 13276 / CCUG 48851 / CIP 106301 / E264).